We begin with the raw amino-acid sequence, 431 residues long: UDP-N-acetylglucosamine--N-acetylmuramyl-(pentapeptide) pyrophosphoryl-undecaprenol N-acetylglucosamine transferase (431 aa).

UDP-N-acetyl-alpha-D-glucosamine-binding positions include 29–31, Asn-141, Arg-177, Ser-205, Ile-258, and Gln-303; that span reads TGG. Residues 370–431 are disordered; sequence AGSGDGQPPA…NPGASAGGAP (62 aa). A compositionally biased stretch (polar residues) spans 395–420; sequence KQGSMQTSVNGDRSAQLIATNPQSRL.

Belongs to the glycosyltransferase 28 family. MurG subfamily.

Its subcellular location is the cell inner membrane. It catalyses the reaction di-trans,octa-cis-undecaprenyl diphospho-N-acetyl-alpha-D-muramoyl-L-alanyl-D-glutamyl-meso-2,6-diaminopimeloyl-D-alanyl-D-alanine + UDP-N-acetyl-alpha-D-glucosamine = di-trans,octa-cis-undecaprenyl diphospho-[N-acetyl-alpha-D-glucosaminyl-(1-&gt;4)]-N-acetyl-alpha-D-muramoyl-L-alanyl-D-glutamyl-meso-2,6-diaminopimeloyl-D-alanyl-D-alanine + UDP + H(+). Its pathway is cell wall biogenesis; peptidoglycan biosynthesis. Its function is as follows. Cell wall formation. Catalyzes the transfer of a GlcNAc subunit on undecaprenyl-pyrophosphoryl-MurNAc-pentapeptide (lipid intermediate I) to form undecaprenyl-pyrophosphoryl-MurNAc-(pentapeptide)GlcNAc (lipid intermediate II). This chain is UDP-N-acetylglucosamine--N-acetylmuramyl-(pentapeptide) pyrophosphoryl-undecaprenol N-acetylglucosamine transferase, found in Xanthomonas euvesicatoria pv. vesicatoria (strain 85-10) (Xanthomonas campestris pv. vesicatoria).